The sequence spans 451 residues: Tubulin alpha-1 chain (451 aa).

Q11 contributes to the GTP binding site. K40 is subject to N6-acetyllysine. Residues E71, G144, T145, T179, N206, and N228 each coordinate GTP. E71 is a Mg(2+) binding site. E254 is a catalytic residue.

Belongs to the tubulin family. In terms of assembly, dimer of alpha and beta chains. A typical microtubule is a hollow water-filled tube with an outer diameter of 25 nm and an inner diameter of 15 nM. Alpha-beta heterodimers associate head-to-tail to form protofilaments running lengthwise along the microtubule wall with the beta-tubulin subunit facing the microtubule plus end conferring a structural polarity. Microtubules usually have 13 protofilaments but different protofilament numbers can be found in some organisms and specialized cells. It depends on Mg(2+) as a cofactor. Undergoes a tyrosination/detyrosination cycle, the cyclic removal and re-addition of a C-terminal tyrosine residue by the enzymes tubulin tyrosine carboxypeptidase (TTCP) and tubulin tyrosine ligase (TTL), respectively. Post-translationally, acetylation of alpha chains at Lys-40 stabilizes microtubules and affects affinity and processivity of microtubule motors. This modification has a role in multiple cellular functions, ranging from cell motility, cell cycle progression or cell differentiation to intracellular trafficking and signaling.

The protein resides in the cytoplasm. It localises to the cytoskeleton. The catalysed reaction is GTP + H2O = GDP + phosphate + H(+). Functionally, tubulin is the major constituent of microtubules, a cylinder consisting of laterally associated linear protofilaments composed of alpha- and beta-tubulin heterodimers. Microtubules grow by the addition of GTP-tubulin dimers to the microtubule end, where a stabilizing cap forms. Below the cap, tubulin dimers are in GDP-bound state, owing to GTPase activity of alpha-tubulin. This is Tubulin alpha-1 chain (TUBA1) from Chlamydomonas reinhardtii (Chlamydomonas smithii).